The sequence spans 488 residues: H2.0-like homeobox protein (488 aa).

Disordered regions lie at residues 118–173 and 331–488; these read AYHH…SSKD and WRHS…LGCL. Composition is skewed to low complexity over residues 125 to 135 and 158 to 171; these read QQQQQQQQPQQ and PNPHHSGSAPAPSS. A DNA-binding region (homeobox) is located at residues 276–335; it reads RSWSRAVFSNLQRKGLEKRFEIQKYVTKPDRKQLAAMLGLTDAQVKVWFQNRRMKWRHSK. Composition is skewed to basic and acidic residues over residues 334–349 and 363–372; these read SKEAQAQKDKDKEAGE and DERSPSRSEG. Residues 373 to 383 are compositionally biased toward acidic residues; sequence EAESESSDSES. Residues 390–401 are compositionally biased toward basic and acidic residues; that stretch reads DTERTEGSERSL. Residues 422-432 are compositionally biased toward gly residues; it reads GSGGSSGGGGN. Residues 433–454 are compositionally biased toward low complexity; that stretch reads SFSFSSASSLSSSSTSAGCASS.

The protein belongs to the H2.0 homeobox family. In terms of tissue distribution, low level in normal B and T-cells, high level in activated lymphocytes and monocytes. Also found in thymus, tonsil, bone marrow, developing vessels, and fetal brain.

Its subcellular location is the nucleus. Functionally, transcription factor required for TBX21/T-bet-dependent maturation of Th1 cells as well as maintenance of Th1-specific gene expression. Involved in embryogenesis and hematopoiesis. This chain is H2.0-like homeobox protein (HLX), found in Homo sapiens (Human).